The primary structure comprises 238 residues: Cysteine-rich venom protein 1 (238 aa).

Positions 1–19 are cleaved as a signal peptide; sequence MIAFIVLLSLAAVLQQSSG. Residues 38 to 164 enclose the SCP domain; that stretch reads VDKHNALRRS…STKYLYVCQY (127 aa). 8 disulfide bridges follow: cysteine 75–cysteine 153, cysteine 92–cysteine 165, cysteine 148–cysteine 162, cysteine 184–cysteine 191, cysteine 187–cysteine 196, cysteine 200–cysteine 233, cysteine 209–cysteine 227, and cysteine 218–cysteine 231. A ShKT domain is found at 200 to 233; that stretch reads CEYEDTFSNCKALAKKTKCKTEWIKSKCPATCFC.

This sequence belongs to the CRISP family. As to expression, expressed by the venom gland.

Its subcellular location is the secreted. Functionally, blocks contraction of smooth muscle elicited by high potassium-induced depolarization, but does not block caffeine-stimulated contraction. May target voltage-gated calcium channels on smooth muscle. The chain is Cysteine-rich venom protein 1 from Hydrophis hardwickii (Hardwick's spine-bellied seasnake).